Reading from the N-terminus, the 712-residue chain is Ribosomal RNA large subunit methyltransferase K/L (712 aa).

The 112-residue stretch at 46-157 folds into the THUMP domain; the sequence is GAYQALLHSR…RENMVVSLDL (112 aa).

It belongs to the methyltransferase superfamily. RlmKL family.

It is found in the cytoplasm. It catalyses the reaction guanosine(2445) in 23S rRNA + S-adenosyl-L-methionine = N(2)-methylguanosine(2445) in 23S rRNA + S-adenosyl-L-homocysteine + H(+). The catalysed reaction is guanosine(2069) in 23S rRNA + S-adenosyl-L-methionine = N(2)-methylguanosine(2069) in 23S rRNA + S-adenosyl-L-homocysteine + H(+). Its function is as follows. Specifically methylates the guanine in position 2445 (m2G2445) and the guanine in position 2069 (m7G2069) of 23S rRNA. The protein is Ribosomal RNA large subunit methyltransferase K/L of Actinobacillus pleuropneumoniae serotype 3 (strain JL03).